Here is a 492-residue protein sequence, read N- to C-terminus: Thyroid hormone receptor alpha (492 aa).

The tract at residues Met1–Cys33 is disordered. Residues Met1–Gln52 form a modulating region. 8 residues coordinate Zn(2+): Cys53, Cys56, Cys70, Cys73, Cys91, Cys97, Cys107, and Cys110. 2 consecutive NR C4-type zinc fingers follow at residues Cys53 to Cys73 and Cys91 to Cys115. Positions Cys53–Asp127 form a DNA-binding region, nuclear receptor. The region spanning Glu163 to Val407 is the NR LBD domain. Arg228 and Ser277 together coordinate 3,3',5-triiodo-L-thyronine. Positions Ala457–Pro492 are disordered.

The protein belongs to the nuclear hormone receptor family. NR1 subfamily. Binds DNA as a dimer; homodimer and heterodimer with RXRB. Interacts with NCOA3 and NCOA6 coactivators, leading to a strong increase of transcription of target genes. Probably interacts with SFPQ. Interacts with C1D. Interacts with AKAP13. Interacts with TP53INP2. Interacts with PER2. Isoform alpha-2 and isoform alpha-1 interact with TACC1, but the interaction with alpha-1 is weaker. The interaction with isoform alpha-1, but not alpha-2, is decreased in the presence of thyroid hormone T3.

It is found in the nucleus. The protein resides in the cytoplasm. Functionally, nuclear hormone receptor that can act as a repressor or activator of transcription. High affinity receptor for thyroid hormones, including triiodothyronine and thyroxine. This is Thyroid hormone receptor alpha (Thra) from Rattus norvegicus (Rat).